Reading from the N-terminus, the 463-residue chain is L-seryl-tRNA(Sec) selenium transferase (463 aa).

K295 is subject to N6-(pyridoxal phosphate)lysine.

This sequence belongs to the SelA family. In terms of assembly, homodecamer; pentamer of dimers. Binds only one seryl-tRNA(Sec) per dimer. Pyridoxal 5'-phosphate serves as cofactor.

Its subcellular location is the cytoplasm. The catalysed reaction is L-seryl-tRNA(Sec) + selenophosphate + H(+) = L-selenocysteinyl-tRNA(Sec) + phosphate. Its pathway is aminoacyl-tRNA biosynthesis; selenocysteinyl-tRNA(Sec) biosynthesis; selenocysteinyl-tRNA(Sec) from L-seryl-tRNA(Sec) (bacterial route): step 1/1. Functionally, converts seryl-tRNA(Sec) to selenocysteinyl-tRNA(Sec) required for selenoprotein biosynthesis. This Proteus mirabilis (strain HI4320) protein is L-seryl-tRNA(Sec) selenium transferase.